The following is a 257-amino-acid chain: Small ribosomal subunit protein eS1 (257 aa).

A disordered region spans residues 237–257 (GADGEKVDRPDDYEPPVQQEV). Over residues 239 to 248 (DGEKVDRPDD) the composition is skewed to basic and acidic residues.

This sequence belongs to the eukaryotic ribosomal protein eS1 family. Component of the small ribosomal subunit. Mature ribosomes consist of a small (40S) and a large (60S) subunit. The 40S subunit contains about 33 different proteins and 1 molecule of RNA (18S). The 60S subunit contains about 49 different proteins and 3 molecules of RNA (28S, 5.8S and 5S).

The protein localises to the cytoplasm. The polypeptide is Small ribosomal subunit protein eS1 (Caenorhabditis elegans).